The chain runs to 512 residues: ATP synthase subunit alpha 2 (512 aa).

ATP is bound at residue 169–176 (GDRQTGKT).

The protein belongs to the ATPase alpha/beta chains family. In terms of assembly, F-type ATPases have 2 components, CF(1) - the catalytic core - and CF(0) - the membrane proton channel. CF(1) has five subunits: alpha(3), beta(3), gamma(1), delta(1), epsilon(1). CF(0) has three main subunits: a(1), b(2) and c(9-12). The alpha and beta chains form an alternating ring which encloses part of the gamma chain. CF(1) is attached to CF(0) by a central stalk formed by the gamma and epsilon chains, while a peripheral stalk is formed by the delta and b chains.

The protein resides in the cell inner membrane. It catalyses the reaction ATP + H2O + 4 H(+)(in) = ADP + phosphate + 5 H(+)(out). Functionally, produces ATP from ADP in the presence of a proton gradient across the membrane. The alpha chain is a regulatory subunit. The polypeptide is ATP synthase subunit alpha 2 (Vibrio campbellii (strain ATCC BAA-1116)).